The sequence spans 158 residues: MTYHIDIQNATGKLLPLSEDEITKLASLALRDHKQDAELTVRLVDVEEMTYLNHTYRKKNKPTNVLAFPCSLPANIELECPLLGDVVICPEVLLAESAQFNKSLHAHWSLILIHGVLHLLGYDHIKDEEASIMQMLEAKLLAELGYANPYEVEENELE.

Zn(2+) is bound by residues histidine 114, histidine 118, and histidine 124.

Belongs to the endoribonuclease YbeY family. Zn(2+) serves as cofactor.

Its subcellular location is the cytoplasm. Functionally, single strand-specific metallo-endoribonuclease involved in late-stage 70S ribosome quality control and in maturation of the 3' terminus of the 16S rRNA. This Legionella pneumophila (strain Paris) protein is Endoribonuclease YbeY.